A 432-amino-acid chain; its full sequence is MNTLSAISNNKQSKELQILNINFNQDQGCFAVGHEYGFLVYNTNPIDIRVKRNFNINGHGSGIAHITMLHRTNYLALVGGGKNPKFANNKLVIWDDLKRKNSLNLEFMSPVLNVLLSRIRIIVVLKNQVLVYGFSSPPKKFATYETIENEFGLADLSVNFTNSIGNNLSTSNSSISSLVSNQVSYDSNKYQTLAFPGRSIGQIQIVDVSPSGQEKNLVSIIKAHKSKIRCLALNRSGTLVASASETGTIIRVHSTHNTALLYEFRRGLDRAIVTSMKFSHDDSKLAVLSDKNTLHVYNVSPLNTSSGATSDLVTHNETYPVNRSHLLGSIAFPIPIPKYFKSTWSFCSVNTNKYHPSGSDNDTINDVGIIGWSGNDSIIIIWQNKKIWEKYVIVEKRNKYLGDINDGLNTSHQGSSNWELVRFNWKNLDNLD.

WD repeat units follow at residues 223–263 (AHKS…LLYE) and 268–307 (LDRA…TSSG).

It belongs to the WD repeat PROPPIN family.

It localises to the vacuole membrane. It is found in the cytoplasmic vesicle membrane. Its function is as follows. Involved in mitochondrial or peroxisomal functions and amino acid signaling pathways. This Debaryomyces hansenii (strain ATCC 36239 / CBS 767 / BCRC 21394 / JCM 1990 / NBRC 0083 / IGC 2968) (Yeast) protein is SVP1-like protein 2 (HSV2).